We begin with the raw amino-acid sequence, 374 residues long: Chaperone protein DnaJ (374 aa).

The J domain maps to 5-71; sequence DLYAILGVCR…QKRASYDRFG (67 aa). The CR-type zinc-finger motif lies at 132–210; that stretch reads GVEKQIRIAT…CQGTGRVKDT (79 aa). C145, C148, C162, C165, C184, C187, C198, and C201 together coordinate Zn(2+). CXXCXGXG motif repeat units lie at residues 145-152, 162-169, 184-191, and 198-205; these read CGECHGSG, CPTCNGAG, CPTCHGRG, and CNKCQGTG.

This sequence belongs to the DnaJ family. In terms of assembly, homodimer. Zn(2+) is required as a cofactor.

It localises to the cytoplasm. Its function is as follows. Participates actively in the response to hyperosmotic and heat shock by preventing the aggregation of stress-denatured proteins and by disaggregating proteins, also in an autonomous, DnaK-independent fashion. Unfolded proteins bind initially to DnaJ; upon interaction with the DnaJ-bound protein, DnaK hydrolyzes its bound ATP, resulting in the formation of a stable complex. GrpE releases ADP from DnaK; ATP binding to DnaK triggers the release of the substrate protein, thus completing the reaction cycle. Several rounds of ATP-dependent interactions between DnaJ, DnaK and GrpE are required for fully efficient folding. Also involved, together with DnaK and GrpE, in the DNA replication of plasmids through activation of initiation proteins. This Dichelobacter nodosus (strain VCS1703A) protein is Chaperone protein DnaJ.